We begin with the raw amino-acid sequence, 531 residues long: Keratin, type II cytoskeletal 79 (531 aa).

Residues 1–12 (MRSSLSRQTFST) show a composition bias toward polar residues. The segment at 1–55 (MRSSLSRQTFSTKGGFSSNSASGGGGSRMRTSYSSVTMSRGSGGGGGVRSGSSSG) is disordered. The segment at 1–138 (MRSSLSRQTF…DPEIQRVRTQ (138 aa)) is head. A compositionally biased stretch (low complexity) spans 28-40 (RMRTSYSSVTMSR). The segment covering 41–55 (GSGGGGGVRSGSSSG) has biased composition (gly residues). The segment at 139–174 (EREQIKTLNNKFASFIDKVRFLEQQNKVLETKWALL) is coil 1A. The IF rod domain maps to 139 to 453 (EREQIKTLNN…KLLESEESRM (315 aa)). Positions 175 to 194 (QEQSQNTGVARSLEPFFENY) are linker 1. The segment at 195-286 (LSTLRRQLDT…QLFEMELSQV (92 aa)) is coil 1B. Positions 287-310 (QTNVSDTNVILSMDNNRNLDLDSI) are linker 12. The segment at 311-449 (IAEVKAQYEL…ATYRKLLESE (139 aa)) is coil 2. The segment at 450–531 (ESRMSGDCPS…TTVKTSSRRY (82 aa)) is tail.

Belongs to the intermediate filament family. In terms of assembly, heterotetramer of two type I and two type II keratins.

This is Keratin, type II cytoskeletal 79 (Krt79) from Mus musculus (Mouse).